The primary structure comprises 259 residues: F-box/kelch-repeat protein At2g22050 (259 aa).

Positions 1–12 are enriched in basic residues; sequence MSPSSKKFKKQS. The segment at 1–29 is disordered; the sequence is MSPSSKKFKKQSSSKSVKPPLEDNDPSLP. An F-box domain is found at 28–76; the sequence is LPSFTSLPDEIVLDCLQRVPRSYYLNLCRVSKTLRSLVRSPELSRLRTL. One copy of the Kelch repeat lies at 142-186; it reads EIYFVGGSFEPMSELWILDTRTGMFRQGPSMKVARTDEASVGVIN.

The polypeptide is F-box/kelch-repeat protein At2g22050 (Arabidopsis thaliana (Mouse-ear cress)).